Here is a 98-residue protein sequence, read N- to C-terminus: NADH-ubiquinone oxidoreductase chain 4L (98 aa).

3 helical membrane-spanning segments follow: residues 1–21, 29–49, and 61–81; these read MIPT…GMLI, SLLC…LIAL, and IILL…LVSI.

Belongs to the complex I subunit 4L family. As to quaternary structure, core subunit of respiratory chain NADH dehydrogenase (Complex I) which is composed of 45 different subunits.

It is found in the mitochondrion inner membrane. It carries out the reaction a ubiquinone + NADH + 5 H(+)(in) = a ubiquinol + NAD(+) + 4 H(+)(out). Core subunit of the mitochondrial membrane respiratory chain NADH dehydrogenase (Complex I) which catalyzes electron transfer from NADH through the respiratory chain, using ubiquinone as an electron acceptor. Part of the enzyme membrane arm which is embedded in the lipid bilayer and involved in proton translocation. In Macaca ochreata (Booted macaque), this protein is NADH-ubiquinone oxidoreductase chain 4L (MT-ND4L).